Reading from the N-terminus, the 369-residue chain is Probable dual-specificity RNA methyltransferase RlmN (369 aa).

Residue E108 is the Proton acceptor of the active site. Positions 114 to 351 constitute a Radical SAM core domain; the sequence is YPDRATLCIS…LAQGVSCTVR (238 aa). Residues C121 and C362 are joined by a disulfide bond. Positions 128, 132, and 135 each coordinate [4Fe-4S] cluster. Residues 183-184, S217, 240-242, and N319 contribute to the S-adenosyl-L-methionine site; these read GE and SLH. The active-site S-methylcysteine intermediate is the C362.

It belongs to the radical SAM superfamily. RlmN family. [4Fe-4S] cluster is required as a cofactor.

It localises to the cytoplasm. The enzyme catalyses adenosine(2503) in 23S rRNA + 2 reduced [2Fe-2S]-[ferredoxin] + 2 S-adenosyl-L-methionine = 2-methyladenosine(2503) in 23S rRNA + 5'-deoxyadenosine + L-methionine + 2 oxidized [2Fe-2S]-[ferredoxin] + S-adenosyl-L-homocysteine. It carries out the reaction adenosine(37) in tRNA + 2 reduced [2Fe-2S]-[ferredoxin] + 2 S-adenosyl-L-methionine = 2-methyladenosine(37) in tRNA + 5'-deoxyadenosine + L-methionine + 2 oxidized [2Fe-2S]-[ferredoxin] + S-adenosyl-L-homocysteine. Specifically methylates position 2 of adenine 2503 in 23S rRNA and position 2 of adenine 37 in tRNAs. In Rhodococcus jostii (strain RHA1), this protein is Probable dual-specificity RNA methyltransferase RlmN.